Reading from the N-terminus, the 241-residue chain is Probable septum site-determining protein MinC (241 aa).

The segment at 109–135 (PSGARERKVDPSSKTPAKPAEPTYRPT) is disordered.

The protein belongs to the MinC family. Interacts with MinD and FtsZ.

Its function is as follows. Cell division inhibitor that blocks the formation of polar Z ring septums. Rapidly oscillates between the poles of the cell to destabilize FtsZ filaments that have formed before they mature into polar Z rings. Prevents FtsZ polymerization. The protein is Probable septum site-determining protein MinC of Stutzerimonas stutzeri (strain A1501) (Pseudomonas stutzeri).